Reading from the N-terminus, the 477-residue chain is Ribosomal RNA small subunit methyltransferase F (477 aa).

S-adenosyl-L-methionine contacts are provided by residues 125–131, E149, D176, and D194; that span reads AAAPGSK. C247 functions as the Nucleophile in the catalytic mechanism.

This sequence belongs to the class I-like SAM-binding methyltransferase superfamily. RsmB/NOP family.

It localises to the cytoplasm. It catalyses the reaction cytidine(1407) in 16S rRNA + S-adenosyl-L-methionine = 5-methylcytidine(1407) in 16S rRNA + S-adenosyl-L-homocysteine + H(+). Functionally, specifically methylates the cytosine at position 1407 (m5C1407) of 16S rRNA. The polypeptide is Ribosomal RNA small subunit methyltransferase F (Klebsiella pneumoniae (strain 342)).